A 418-amino-acid chain; its full sequence is D-amino acid dehydrogenase 1 (418 aa).

3-17 (IMVLGGGVIGVTTAY) contributes to the FAD binding site.

It belongs to the DadA oxidoreductase family. Requires FAD as cofactor.

It carries out the reaction a D-alpha-amino acid + A + H2O = a 2-oxocarboxylate + AH2 + NH4(+). It participates in amino-acid degradation; D-alanine degradation; NH(3) and pyruvate from D-alanine: step 1/1. Its function is as follows. Oxidative deamination of D-amino acids. In Mesorhizobium japonicum (strain LMG 29417 / CECT 9101 / MAFF 303099) (Mesorhizobium loti (strain MAFF 303099)), this protein is D-amino acid dehydrogenase 1 (dadA1).